We begin with the raw amino-acid sequence, 183 residues long: Adenine phosphoribosyltransferase (183 aa).

It belongs to the purine/pyrimidine phosphoribosyltransferase family. Homodimer.

Its subcellular location is the cytoplasm. It carries out the reaction AMP + diphosphate = 5-phospho-alpha-D-ribose 1-diphosphate + adenine. Its pathway is purine metabolism; AMP biosynthesis via salvage pathway; AMP from adenine: step 1/1. Catalyzes a salvage reaction resulting in the formation of AMP, that is energically less costly than de novo synthesis. The sequence is that of Adenine phosphoribosyltransferase from Proteus mirabilis (strain HI4320).